A 514-amino-acid chain; its full sequence is Alanine--glyoxylate aminotransferase 2, mitochondrial (514 aa).

Residues 1 to 41 constitute a mitochondrion transit peptide; it reads MTLIWRHLLRPLCLVTSAPRILEMHPFLSLGTSRTSVTKLS. K71 bears the N6-acetyllysine; alternate mark. K71 carries the post-translational modification N6-succinyllysine; alternate. N6-acetyllysine is present on K84. K262 carries the N6-acetyllysine; alternate modification. At K262 the chain carries N6-succinyllysine; alternate. At K304 the chain carries N6-succinyllysine. Residue K350 is modified to N6-(pyridoxal phosphate)lysine. K417 and K420 each carry N6-acetyllysine; alternate. N6-succinyllysine; alternate occurs at positions 417 and 420.

The protein belongs to the class-III pyridoxal-phosphate-dependent aminotransferase family. As to quaternary structure, homotetramer. The cofactor is pyridoxal 5'-phosphate. As to expression, expressed in the convoluted tubule in the kidney and in the liver hepatocytes (at protein level).

The protein resides in the mitochondrion. The enzyme catalyses glyoxylate + L-alanine = glycine + pyruvate. The catalysed reaction is (R)-3-amino-2-methylpropanoate + pyruvate = 2-methyl-3-oxopropanoate + L-alanine. It catalyses the reaction 3-oxopropanoate + L-alanine = beta-alanine + pyruvate. It carries out the reaction 2-oxobutanoate + L-alanine = (2S)-2-aminobutanoate + pyruvate. The enzyme catalyses N(omega),N(omega)-dimethyl-L-arginine + pyruvate = 5-(3,3-dimethylguanidino)-2-oxopentanoate + L-alanine. The catalysed reaction is N(omega),N('omega)-dimethyl-L-arginine + pyruvate = 5-(3,3'-dimethylguanidino)-2-oxopentanoate + L-alanine. It catalyses the reaction N(omega),N(omega)-dimethyl-L-arginine + glyoxylate = 5-(3,3-dimethylguanidino)-2-oxopentanoate + glycine. It carries out the reaction N(omega),N('omega)-dimethyl-L-arginine + glyoxylate = 5-(3,3'-dimethylguanidino)-2-oxopentanoate + glycine. The enzyme catalyses N(omega)-methyl-L-arginine + pyruvate = 5-(3-methylguanidino)-2-oxopentanoate + L-alanine. The catalysed reaction is N(omega)-methyl-L-arginine + glyoxylate = 5-(3-methylguanidino)-2-oxopentanoate + glycine. It catalyses the reaction L-ornithine + pyruvate = 5-amino-2-oxopentanoate + L-alanine. It carries out the reaction L-ornithine + glyoxylate = 5-amino-2-oxopentanoate + glycine. The enzyme catalyses (2S)-2-aminobutanoate + glyoxylate = 2-oxobutanoate + glycine. The catalysed reaction is N(omega),N(omega)-dimethyl-L-arginine + oxaloacetate = 5-(3,3-dimethylguanidino)-2-oxopentanoate + L-aspartate. It catalyses the reaction oxaloacetate + L-alanine = L-aspartate + pyruvate. It carries out the reaction N(omega),N(omega)-dimethyl-L-arginine + 2-oxobutanoate = 5-(3,3-dimethylguanidino)-2-oxopentanoate + (2S)-2-aminobutanoate. The enzyme catalyses 2-oxopentanoate + N(omega),N(omega)-dimethyl-L-arginine = 5-(3,3-dimethylguanidino)-2-oxopentanoate + L-2-aminopentanoate. The catalysed reaction is 2-oxohexanoate + N(omega),N(omega)-dimethyl-L-arginine = L-2-aminohexanoate + 5-(3,3-dimethylguanidino)-2-oxopentanoate. Functionally, multifunctional aminotransferase with a broad substrate specificity. Catalyzes the conversion of glyoxylate to glycine using alanine as the amino donor. Catalyzes metabolism of not L- but the D-isomer of D-beta-aminoisobutyric acid to generate 2-methyl-3-oxopropanoate and alanine. Catalyzes the transfer of the amino group from beta-alanine to pyruvate to yield L-alanine and 3-oxopropanoate. Can metabolize NG-monomethyl-L-arginine (NMMA), asymmetric NG,NG-dimethyl-L-arginine (ADMA) and symmetric NG,N'G-dimethyl-L-arginine (SDMA). ADMA is a potent inhibitor of nitric-oxide (NO) synthase, and this activity provides mechanism through which the kidney regulates blood pressure. In Homo sapiens (Human), this protein is Alanine--glyoxylate aminotransferase 2, mitochondrial (AGXT2).